Consider the following 356-residue polypeptide: 5-formaminoimidazole-4-carboxamide-1-(beta)-D-ribofuranosyl 5'-monophosphate synthetase (356 aa).

5-amino-1-(5-phospho-beta-D-ribosyl)imidazole-4-carboxamide-binding residues include H27 and S94. The 218-residue stretch at 116-333 (RCLAWESDRE…YSDLIEKGLS (218 aa)) folds into the ATP-grasp domain. Residues 145 to 196 (AELI…TRYY) and E226 each bind ATP. N255 is a binding site for 5-amino-1-(5-phospho-beta-D-ribosyl)imidazole-4-carboxamide. Positions 293 and 306 each coordinate Mg(2+).

The protein belongs to the phosphohexose mutase family. The cofactor is Mg(2+). Mn(2+) is required as a cofactor.

The enzyme catalyses 5-amino-1-(5-phospho-beta-D-ribosyl)imidazole-4-carboxamide + formate + ATP = 5-formamido-1-(5-phospho-D-ribosyl)imidazole-4-carboxamide + ADP + phosphate. It functions in the pathway purine metabolism; IMP biosynthesis via de novo pathway; 5-formamido-1-(5-phospho-D-ribosyl)imidazole-4-carboxamide from 5-amino-1-(5-phospho-D-ribosyl)imidazole-4-carboxamide (formate route): step 1/1. In terms of biological role, catalyzes the ATP- and formate-dependent formylation of 5-aminoimidazole-4-carboxamide-1-beta-d-ribofuranosyl 5'-monophosphate (AICAR) to 5-formaminoimidazole-4-carboxamide-1-beta-d-ribofuranosyl 5'-monophosphate (FAICAR) in the absence of folates. This chain is 5-formaminoimidazole-4-carboxamide-1-(beta)-D-ribofuranosyl 5'-monophosphate synthetase, found in Methanothrix thermoacetophila (strain DSM 6194 / JCM 14653 / NBRC 101360 / PT) (Methanosaeta thermophila).